Consider the following 560-residue polypeptide: uncharacterized protein (560 aa).

The segment at residues 18-44 (CLRCRRRKVKCDRQYPCSRCKESEESC) is a DNA-binding region (zn(2)-C6 fungal-type). Positions 60–80 (LSRPITRETDSSAHQETRTRL) are disordered. The segment covering 64 to 80 (ITRETDSSAHQETRTRL) has biased composition (basic and acidic residues). The helical transmembrane segment at 182–202 (FATSIILIVTAIAVALSLESF) threads the bilayer.

The protein localises to the nucleus membrane. This is an uncharacterized protein from Schizosaccharomyces pombe (strain 972 / ATCC 24843) (Fission yeast).